A 370-amino-acid chain; its full sequence is Histidinol-phosphate aminotransferase 1 (370 aa).

Residue Lys-222 is modified to N6-(pyridoxal phosphate)lysine.

It belongs to the class-II pyridoxal-phosphate-dependent aminotransferase family. Histidinol-phosphate aminotransferase subfamily. Homodimer. Requires pyridoxal 5'-phosphate as cofactor.

It carries out the reaction L-histidinol phosphate + 2-oxoglutarate = 3-(imidazol-4-yl)-2-oxopropyl phosphate + L-glutamate. Its pathway is amino-acid biosynthesis; L-histidine biosynthesis; L-histidine from 5-phospho-alpha-D-ribose 1-diphosphate: step 7/9. This chain is Histidinol-phosphate aminotransferase 1 (hisC1), found in Bacillus anthracis.